Reading from the N-terminus, the 321-residue chain is Transaldolase (321 aa).

Lysine 132 acts as the Schiff-base intermediate with substrate in catalysis.

Belongs to the transaldolase family. Type 1 subfamily. Homodimer.

It is found in the cytoplasm. It catalyses the reaction D-sedoheptulose 7-phosphate + D-glyceraldehyde 3-phosphate = D-erythrose 4-phosphate + beta-D-fructose 6-phosphate. It participates in carbohydrate degradation; pentose phosphate pathway; D-glyceraldehyde 3-phosphate and beta-D-fructose 6-phosphate from D-ribose 5-phosphate and D-xylulose 5-phosphate (non-oxidative stage): step 2/3. Its function is as follows. Transaldolase is important for the balance of metabolites in the pentose-phosphate pathway. This Rhizobium rhizogenes (strain K84 / ATCC BAA-868) (Agrobacterium radiobacter) protein is Transaldolase.